A 181-amino-acid chain; its full sequence is NADH-quinone oxidoreductase subunit I (181 aa).

4Fe-4S ferredoxin-type domains follow at residues threonine 52 to glycine 81 and lysine 91 to aspartate 120. [4Fe-4S] cluster-binding residues include cysteine 61, cysteine 64, cysteine 67, cysteine 71, cysteine 100, cysteine 103, cysteine 106, and cysteine 110.

Belongs to the complex I 23 kDa subunit family. In terms of assembly, NDH-1 is composed of 13 different subunits. Subunits NuoA, H, J, K, L, M, N constitute the membrane sector of the complex. It depends on [4Fe-4S] cluster as a cofactor.

It is found in the cell inner membrane. It catalyses the reaction a quinone + NADH + 5 H(+)(in) = a quinol + NAD(+) + 4 H(+)(out). Functionally, NDH-1 shuttles electrons from NADH, via FMN and iron-sulfur (Fe-S) centers, to quinones in the respiratory chain. The immediate electron acceptor for the enzyme in this species is believed to be ubiquinone. Couples the redox reaction to proton translocation (for every two electrons transferred, four hydrogen ions are translocated across the cytoplasmic membrane), and thus conserves the redox energy in a proton gradient. The protein is NADH-quinone oxidoreductase subunit I of Blochmanniella pennsylvanica (strain BPEN).